Consider the following 914-residue polypeptide: NADH-quinone oxidoreductase subunit G (914 aa).

The region spanning 1 to 83 (MATIHVDGKE…GTFISIDDSE (83 aa)) is the 2Fe-2S ferredoxin-type domain. Residues C34, C45, C48, and C67 each contribute to the [2Fe-2S] cluster site. A 4Fe-4S His(Cys)3-ligated-type domain is found at 83-122 (EAKAFRESVVEWLMTNHPHDCPVCEEGGNCHLQDMTVMTG). H99, C103, C106, C112, C151, C154, C157, C201, C228, C231, C235, and C263 together coordinate [4Fe-4S] cluster. A 4Fe-4S Mo/W bis-MGD-type domain is found at 221-277 (MQFAPSICQQCSVGCNTSPGERYGELRRIENRYNGSVNHYFMCDRGRFGYGYVNLKD).

The protein belongs to the complex I 75 kDa subunit family. Composed of 13 different subunits. Subunits NuoCD, E, F, and G constitute the peripheral sector of the complex. Requires [2Fe-2S] cluster as cofactor. [4Fe-4S] cluster serves as cofactor.

The catalysed reaction is a quinone + NADH + 5 H(+)(in) = a quinol + NAD(+) + 4 H(+)(out). NDH-1 shuttles electrons from NADH, via FMN and iron-sulfur (Fe-S) centers, to quinones in the respiratory chain. The immediate electron acceptor for the enzyme in this species is believed to be ubiquinone. Couples the redox reaction to proton translocation (for every two electrons transferred, four hydrogen ions are translocated across the cytoplasmic membrane), and thus conserves the redox energy in a proton gradient. The sequence is that of NADH-quinone oxidoreductase subunit G (nuoG) from Yersinia pestis.